Consider the following 300-residue polypeptide: GTPase Era (300 aa).

An Era-type G domain is found at 4–172; sequence KSGFVALAGK…LEKIKEELPE (169 aa). The G1 stretch occupies residues 12–19; the sequence is GKPNVGKS. 12–19 serves as a coordination point for GTP; it reads GKPNVGKS. The interval 38 to 42 is G2; sequence QTTRN. The G3 stretch occupies residues 59–62; it reads DTPG. GTP-binding positions include 59-63 and 121-124; these read DTPGI and NKID. The tract at residues 121–124 is G4; sequence NKID. Residues 151-153 are G5; the sequence is ISA. The KH type-2 domain maps to 195-280; that stretch reads IREKIFHLTR…YLDLNVKVKE (86 aa).

The protein belongs to the TRAFAC class TrmE-Era-EngA-EngB-Septin-like GTPase superfamily. Era GTPase family. As to quaternary structure, monomer.

It localises to the cytoplasm. It is found in the cell inner membrane. In terms of biological role, an essential GTPase that binds both GDP and GTP, with rapid nucleotide exchange. Plays a role in 16S rRNA processing and 30S ribosomal subunit biogenesis and possibly also in cell cycle regulation and energy metabolism. This chain is GTPase Era, found in Thermotoga petrophila (strain ATCC BAA-488 / DSM 13995 / JCM 10881 / RKU-1).